Reading from the N-terminus, the 165-residue chain is 3-isopropylmalate dehydratase small subunit (165 aa).

It belongs to the LeuD family. LeuD type 2 subfamily. In terms of assembly, heterodimer of LeuC and LeuD.

It catalyses the reaction (2R,3S)-3-isopropylmalate = (2S)-2-isopropylmalate. Its pathway is amino-acid biosynthesis; L-leucine biosynthesis; L-leucine from 3-methyl-2-oxobutanoate: step 2/4. Its function is as follows. Catalyzes the isomerization between 2-isopropylmalate and 3-isopropylmalate, via the formation of 2-isopropylmaleate. This chain is 3-isopropylmalate dehydratase small subunit, found in Saccharolobus islandicus (strain Y.N.15.51 / Yellowstone #2) (Sulfolobus islandicus).